The primary structure comprises 166 residues: NAD(P)H-quinone oxidoreductase subunit I, chloroplastic (166 aa).

4Fe-4S ferredoxin-type domains follow at residues 55 to 84 (GRIHFEFDKCIACEVCVRVCPIDLPVVDWK) and 95 to 124 (LNYSIDFGICIFCGNCVEYCPTNCLSMTEE). Residues Cys64, Cys67, Cys70, Cys74, Cys104, Cys107, Cys110, and Cys114 each contribute to the [4Fe-4S] cluster site.

It belongs to the complex I 23 kDa subunit family. NDH is composed of at least 16 different subunits, 5 of which are encoded in the nucleus. Requires [4Fe-4S] cluster as cofactor.

It localises to the plastid. The protein resides in the chloroplast thylakoid membrane. The catalysed reaction is a plastoquinone + NADH + (n+1) H(+)(in) = a plastoquinol + NAD(+) + n H(+)(out). The enzyme catalyses a plastoquinone + NADPH + (n+1) H(+)(in) = a plastoquinol + NADP(+) + n H(+)(out). NDH shuttles electrons from NAD(P)H:plastoquinone, via FMN and iron-sulfur (Fe-S) centers, to quinones in the photosynthetic chain and possibly in a chloroplast respiratory chain. The immediate electron acceptor for the enzyme in this species is believed to be plastoquinone. Couples the redox reaction to proton translocation, and thus conserves the redox energy in a proton gradient. This chain is NAD(P)H-quinone oxidoreductase subunit I, chloroplastic, found in Encelia californica (Bush sunflower).